A 338-amino-acid chain; its full sequence is 4-hydroxythreonine-4-phosphate dehydrogenase (338 aa).

The substrate site is built by H140 and T141. Positions 172, 217, and 271 each coordinate a divalent metal cation. Positions 279, 288, and 297 each coordinate substrate.

Belongs to the PdxA family. In terms of assembly, homodimer. It depends on a divalent metal cation as a cofactor.

The protein localises to the cytoplasm. The catalysed reaction is 4-(phosphooxy)-L-threonine + NAD(+) = 3-amino-2-oxopropyl phosphate + CO2 + NADH. The protein operates within cofactor biosynthesis; pyridoxine 5'-phosphate biosynthesis; pyridoxine 5'-phosphate from D-erythrose 4-phosphate: step 4/5. Catalyzes the NAD(P)-dependent oxidation of 4-(phosphooxy)-L-threonine (HTP) into 2-amino-3-oxo-4-(phosphooxy)butyric acid which spontaneously decarboxylates to form 3-amino-2-oxopropyl phosphate (AHAP). The chain is 4-hydroxythreonine-4-phosphate dehydrogenase from Prosthecochloris aestuarii (strain DSM 271 / SK 413).